The primary structure comprises 373 residues: Superinfection exclusion protein (373 aa).

The first 15 residues, 1 to 15 (MIVLLILSLACTAFT), serve as a signal peptide directing secretion.

The protein belongs to the serpin family. Orthopoxvirus OPG040 subfamily. Interacts with A56 protein.

It is found in the virion membrane. It localises to the host cell membrane. Functionally, prevents cell to cell fusion via its interaction with A56 protein. The A56-K2 complex associates with components of the entry fusion complex (EFC) presumably to avoid superinfection and syncytium formation. This Homo sapiens (Human) protein is Superinfection exclusion protein (OPG040).